The primary structure comprises 363 residues: NAD(P)H-quinone oxidoreductase subunit 1, chloroplastic (363 aa).

A run of 8 helical transmembrane segments spans residues 30-50 (LVPIVTLVLGITIGVLVIVWL), 98-118 (FSIGPSIAVISIFLSYSVIPF), 127-147 (LSIGVFFWIAISSIAPVGLLM), 165-185 (AAQSISYEIPLALCVLSISLL), 203-223 (FWGWNLWRQPIGFIVFLISSL), 248-268 (YSGIKFGLFYIASYLNLLVSS), 300-320 (VFGTLIGIFITLAKTYLFLFI), and 336-356 (LLNLGWKFLLPISLGNLLLTT).

It belongs to the complex I subunit 1 family. As to quaternary structure, NDH is composed of at least 16 different subunits, 5 of which are encoded in the nucleus.

Its subcellular location is the plastid. The protein localises to the chloroplast thylakoid membrane. The enzyme catalyses a plastoquinone + NADH + (n+1) H(+)(in) = a plastoquinol + NAD(+) + n H(+)(out). The catalysed reaction is a plastoquinone + NADPH + (n+1) H(+)(in) = a plastoquinol + NADP(+) + n H(+)(out). Its function is as follows. NDH shuttles electrons from NAD(P)H:plastoquinone, via FMN and iron-sulfur (Fe-S) centers, to quinones in the photosynthetic chain and possibly in a chloroplast respiratory chain. The immediate electron acceptor for the enzyme in this species is believed to be plastoquinone. Couples the redox reaction to proton translocation, and thus conserves the redox energy in a proton gradient. The chain is NAD(P)H-quinone oxidoreductase subunit 1, chloroplastic from Solanum bulbocastanum (Wild potato).